The sequence spans 335 residues: Cut9-interacting protein scn1 (335 aa).

Belongs to the metallo-dependent hydrolases superfamily.

Functionally, interacts with cut9. This is Cut9-interacting protein scn1 (scn1) from Schizosaccharomyces pombe (strain 972 / ATCC 24843) (Fission yeast).